Reading from the N-terminus, the 512-residue chain is Phosphoenolpyruvate carboxylase (512 aa).

It belongs to the PEPCase type 2 family. Homotetramer. Mg(2+) is required as a cofactor.

It carries out the reaction oxaloacetate + phosphate = phosphoenolpyruvate + hydrogencarbonate. Catalyzes the irreversible beta-carboxylation of phosphoenolpyruvate (PEP) to form oxaloacetate (OAA), a four-carbon dicarboxylic acid source for the tricarboxylic acid cycle. The protein is Phosphoenolpyruvate carboxylase of Caldivirga maquilingensis (strain ATCC 700844 / DSM 13496 / JCM 10307 / IC-167).